A 349-amino-acid chain; its full sequence is Selenide, water dikinase (349 aa).

Cys17 is an active-site residue. Residues Lys20 and Met48–Asp50 contribute to the ATP site. Residue Asp51 coordinates Mg(2+). ATP-binding positions include Asp68, Asp91, and Gly139 to Ser141. Asp91 provides a ligand contact to Mg(2+). Residue Asp227 coordinates Mg(2+).

It belongs to the selenophosphate synthase 1 family. Class I subfamily. In terms of assembly, homodimer. Mg(2+) is required as a cofactor.

The enzyme catalyses hydrogenselenide + ATP + H2O = selenophosphate + AMP + phosphate + 2 H(+). Synthesizes selenophosphate from selenide and ATP. This is Selenide, water dikinase from Rhizobium meliloti (strain 1021) (Ensifer meliloti).